The following is a 179-amino-acid chain: Auxin-induced protein IAA6 (179 aa).

An EAR-like (transcriptional repression) motif is present at residues 13-17 (LRLGL). Residues 31–52 (FSEIDGGVEENGGSGDRKSVDK) are disordered. The PB1 domain maps to 75–163 (KMYMKVSMDG…KRLRIMKRSD (89 aa)).

This sequence belongs to the Aux/IAA family. Homodimers and heterodimers.

It localises to the nucleus. Its function is as follows. Aux/IAA proteins are short-lived transcriptional factors that function as repressors of early auxin response genes at low auxin concentrations. Repression is thought to result from the interaction with auxin response factors (ARFs), proteins that bind to the auxin-responsive promoter element (AuxRE). Formation of heterodimers with ARF proteins may alter their ability to modulate early auxin response genes expression. The protein is Auxin-induced protein IAA6 (IAA6) of Pisum sativum (Garden pea).